The chain runs to 651 residues: DNA topoisomerase 3 (651 aa).

Residues 1–134 enclose the Toprim domain; that stretch reads MRLFIAEKPS…KRDKILRCLI (134 aa). Mg(2+) contacts are provided by Glu-7, Asp-103, and Asp-105. The Topo IA-type catalytic domain maps to 155-612; sequence FIPLATSALA…NLNQILPDLV (458 aa). Residues 194 to 199 form an interaction with DNA region; it reads SVGRVQ. Tyr-337 acts as the O-(5'-phospho-DNA)-tyrosine intermediate in catalysis. A disordered region spans residues 631–651; the sequence is SDRAKPKSAVKKSSKSNGETD.

This sequence belongs to the type IA topoisomerase family. Requires Mg(2+) as cofactor.

The catalysed reaction is ATP-independent breakage of single-stranded DNA, followed by passage and rejoining.. Releases the supercoiling and torsional tension of DNA, which is introduced during the DNA replication and transcription, by transiently cleaving and rejoining one strand of the DNA duplex. Introduces a single-strand break via transesterification at a target site in duplex DNA. The scissile phosphodiester is attacked by the catalytic tyrosine of the enzyme, resulting in the formation of a DNA-(5'-phosphotyrosyl)-enzyme intermediate and the expulsion of a 3'-OH DNA strand. The free DNA strand then undergoes passage around the unbroken strand, thus removing DNA supercoils. Finally, in the religation step, the DNA 3'-OH attacks the covalent intermediate to expel the active-site tyrosine and restore the DNA phosphodiester backbone. This is DNA topoisomerase 3 from Haemophilus influenzae (strain ATCC 51907 / DSM 11121 / KW20 / Rd).